The primary structure comprises 213 residues: Peroxynitrite isomerase (213 aa).

Residues Met-1–Ala-10 show a composition bias toward low complexity. The disordered stretch occupies residues Met-1 to Ala-26. Residues Gly-51–Gly-57 carry the GXWXGXG motif. Position 203 (His-203) interacts with heme b.

It belongs to the nitrobindin family. In terms of assembly, homodimer. Heme b is required as a cofactor.

The catalysed reaction is peroxynitrite = nitrate. Its pathway is nitrogen metabolism. Functionally, heme-binding protein able to scavenge peroxynitrite and to protect free L-tyrosine against peroxynitrite-mediated nitration, by acting as a peroxynitrite isomerase that converts peroxynitrite to nitrate. Therefore, this protein likely plays a role in peroxynitrite sensing and in the detoxification of reactive nitrogen and oxygen species (RNS and ROS, respectively). Is able to bind nitric oxide (NO) in vitro, but may act as a sensor of peroxynitrite levels in vivo. This is Peroxynitrite isomerase from Parafrankia sp. (strain EAN1pec).